Here is a 262-residue protein sequence, read N- to C-terminus: Ninja-family protein 3 (262 aa).

A disordered region spans residues 48–69 (RRNSLTCNTSKEAAGQSPEEMN).

This sequence belongs to the Ninja family.

The protein localises to the nucleus. The protein is Ninja-family protein 3 of Zea mays (Maize).